Consider the following 134-residue polypeptide: uncharacterized protein (134 aa).

The next 3 membrane-spanning stretches (helical) occupy residues 21–41, 52–72, and 95–115; these read FSTT…LYLI, LVLL…TPYE, and IVMA…VYII.

It is found in the host membrane. This is an uncharacterized protein from Acidianus two-tailed virus (ATV).